A 90-amino-acid chain; its full sequence is Acylphosphatase (90 aa).

In terms of domain architecture, Acylphosphatase-like spans 5–90 (SFVVHVWGQV…PPQKGGFHTN (86 aa)). Residues arginine 20 and asparagine 38 contribute to the active site.

It belongs to the acylphosphatase family.

It carries out the reaction an acyl phosphate + H2O = a carboxylate + phosphate + H(+). This is Acylphosphatase (acyP) from Aeromonas salmonicida (strain A449).